We begin with the raw amino-acid sequence, 285 residues long: UPF0703 protein YcgQ (285 aa).

A run of 4 helical transmembrane segments spans residues 4–24 (LLVLMGFTFFFYHLHASGNLT), 34–54 (LSFIAIFLLAILTAVQAYLFI), 89–109 (LIYVVFLFPLVSGIFFPIATL), and 210–230 (FVLRFGIIHCIADSGVYGMLV).

Belongs to the UPF0703 family.

It localises to the cell membrane. In Bacillus subtilis (strain 168), this protein is UPF0703 protein YcgQ (ycgQ).